Here is an 86-residue protein sequence, read N- to C-terminus: Small ribosomal subunit protein bS16c (86 aa).

The protein belongs to the bacterial ribosomal protein bS16 family.

Its subcellular location is the plastid. It is found in the chloroplast. This chain is Small ribosomal subunit protein bS16c, found in Liriodendron tulipifera (Tuliptree).